A 248-amino-acid polypeptide reads, in one-letter code: Large ribosomal subunit protein uL29m (248 aa).

2 disordered regions span residues 77–107 (VSKY…GFFG) and 223–248 (AYEP…PPSS).

It belongs to the universal ribosomal protein uL29 family. As to quaternary structure, component of the mitochondrial large ribosomal subunit. Mature mitochondrial ribosomes consist of a small (37S) and a large (54S) subunit. The 37S subunit contains at least 33 different proteins and 1 molecule of RNA (15S). The 54S subunit contains at least 45 different proteins and 1 molecule of RNA (21S).

It localises to the mitochondrion. In Ajellomyces capsulatus (strain NAm1 / WU24) (Darling's disease fungus), this protein is Large ribosomal subunit protein uL29m (MRPL4).